The following is a 78-amino-acid chain: Acyl carrier protein (78 aa).

The region spanning 2–77 is the Carrier domain; sequence SDTEERVKKI…DAVKFIDKAS (76 aa). S37 carries the post-translational modification O-(pantetheine 4'-phosphoryl)serine.

It belongs to the acyl carrier protein (ACP) family. Post-translationally, 4'-phosphopantetheine is transferred from CoA to a specific serine of apo-ACP by AcpS. This modification is essential for activity because fatty acids are bound in thioester linkage to the sulfhydryl of the prosthetic group.

The protein resides in the cytoplasm. The protein operates within lipid metabolism; fatty acid biosynthesis. Its function is as follows. Carrier of the growing fatty acid chain in fatty acid biosynthesis. The chain is Acyl carrier protein from Bartonella bacilliformis (strain ATCC 35685 / KC583 / Herrer 020/F12,63).